The primary structure comprises 98 residues: NADH-ubiquinone oxidoreductase chain 4L (98 aa).

Helical transmembrane passes span 1–21 (MTPTHFSLNAAFMLGLAGLTF), 26–46 (LLSALLCLEGMMLSLFISMAL), and 59–79 (APMLLLAFSACEASAGLALLV).

The protein belongs to the complex I subunit 4L family. In terms of assembly, core subunit of respiratory chain NADH dehydrogenase (Complex I) which is composed of 45 different subunits.

The protein localises to the mitochondrion inner membrane. It catalyses the reaction a ubiquinone + NADH + 5 H(+)(in) = a ubiquinol + NAD(+) + 4 H(+)(out). Functionally, core subunit of the mitochondrial membrane respiratory chain NADH dehydrogenase (Complex I) which catalyzes electron transfer from NADH through the respiratory chain, using ubiquinone as an electron acceptor. Part of the enzyme membrane arm which is embedded in the lipid bilayer and involved in proton translocation. The sequence is that of NADH-ubiquinone oxidoreductase chain 4L (mt-nd4l) from Danio rerio (Zebrafish).